Consider the following 153-residue polypeptide: Ribonuclease H (153 aa).

The 141-residue stretch at 1–141 (MKHIEIYTDG…CDVLARDAAS (141 aa)) folds into the RNase H type-1 domain. Residues D9, E47, D69, and D133 each coordinate Mg(2+).

The protein belongs to the RNase H family. As to quaternary structure, monomer. Requires Mg(2+) as cofactor.

It is found in the cytoplasm. The catalysed reaction is Endonucleolytic cleavage to 5'-phosphomonoester.. Functionally, endonuclease that specifically degrades the RNA of RNA-DNA hybrids. The sequence is that of Ribonuclease H from Pseudoalteromonas atlantica (strain T6c / ATCC BAA-1087).